Reading from the N-terminus, the 154-residue chain is Nascent polypeptide-associated complex subunit beta (154 aa).

The region spanning 33–98 (EQDDTKLIEA…PQEKNVTQLI (66 aa)) is the NAC-A/B domain. Positions 125 to 154 (APTELNAGAPAGGDEGIPDLIDGEKFDEVE) are disordered.

This sequence belongs to the NAC-beta family. Part of the nascent polypeptide-associated complex (NAC), consisting of EGD2 and EGD1. NAC associates with ribosomes via EGD1.

It is found in the cytoplasm. Its subcellular location is the nucleus. In terms of biological role, component of the nascent polypeptide-associated complex (NAC), a dynamic component of the ribosomal exit tunnel, protecting the emerging polypeptides from interaction with other cytoplasmic proteins to ensure appropriate nascent protein targeting. The NAC complex also promotes mitochondrial protein import by enhancing productive ribosome interactions with the outer mitochondrial membrane and blocks the inappropriate interaction of ribosomes translating non-secretory nascent polypeptides with translocation sites in the membrane of the endoplasmic reticulum. EGD1 may act as a transcription factor that exert a negative effect on the expression of several genes that are transcribed by RNA polymerase II. The polypeptide is Nascent polypeptide-associated complex subunit beta (EGD1) (Scheffersomyces stipitis (strain ATCC 58785 / CBS 6054 / NBRC 10063 / NRRL Y-11545) (Yeast)).